Here is a 503-residue protein sequence, read N- to C-terminus: Glycerol kinase (503 aa).

Thr17 serves as a coordination point for ADP. Residues Thr17, Thr18, and Ser19 each coordinate ATP. A sn-glycerol 3-phosphate-binding site is contributed by Thr17. Arg21 lines the ADP pocket. Residues Arg87, Glu88, Tyr141, and Asp245 each contribute to the sn-glycerol 3-phosphate site. Glycerol-binding residues include Arg87, Glu88, Tyr141, Asp245, and Gln246. ADP is bound by residues Thr267 and Gly310. The ATP site is built by Thr267, Gly310, Gln314, and Gly411. Gly411 and Asn415 together coordinate ADP.

Belongs to the FGGY kinase family.

It carries out the reaction glycerol + ATP = sn-glycerol 3-phosphate + ADP + H(+). The protein operates within polyol metabolism; glycerol degradation via glycerol kinase pathway; sn-glycerol 3-phosphate from glycerol: step 1/1. With respect to regulation, inhibited by fructose 1,6-bisphosphate (FBP). Key enzyme in the regulation of glycerol uptake and metabolism. Catalyzes the phosphorylation of glycerol to yield sn-glycerol 3-phosphate. The polypeptide is Glycerol kinase (Pseudomonas tolaasii).